Reading from the N-terminus, the 1214-residue chain is Ubiquitin carboxyl-terminal hydrolase 36 (1214 aa).

The tract at residues 124-169 (AVGSNGHDNNTVNGGTVNGNRKQTVDSGQSNQNSSANPNELPKPKR) is disordered. Over residues 132–143 (NNTVNGGTVNGN) the composition is skewed to low complexity. A compositionally biased stretch (polar residues) spans 144–161 (RKQTVDSGQSNQNSSANP). The region spanning 192-502 (AGMLNVGNTC…NAYIMFYELD (311 aa)) is the USP domain. C201 functions as the Nucleophile in the catalytic mechanism. H461 (proton acceptor) is an active-site residue. Residues 509–523 (SSTINNNSSSSSNNS) show a composition bias toward low complexity. The tract at residues 509–532 (SSTINNNSSSSSNNSVAPKLNGLR) is disordered. S553 and S555 each carry phosphoserine. 5 disordered regions span residues 631 to 819 (GEAA…KQKT), 836 to 964 (HRIA…ASKS), 977 to 1001 (QKLL…SESV), 1048 to 1161 (HGDT…PNFQ), and 1176 to 1214 (KFQQ…QQQS). The span at 633-651 (AAPNANTNANANKSSCNNN) shows a compositional bias: low complexity. The span at 666–685 (SDEDEDEDDSDDDDDDDDDD) shows a compositional bias: acidic residues. T717 is subject to Phosphothreonine. Phosphoserine is present on residues S727 and S729. Composition is skewed to low complexity over residues 735–751 (QQQQ…PQQL) and 785–816 (KTNG…NSSK). Residues 856 to 868 (EQVQTEQGTKKLN) show a composition bias toward polar residues. Positions 869-878 (SASSASASKS) are enriched in low complexity. Phosphoserine is present on S891. Position 894 is a phosphothreonine (T894). A Phosphoserine modification is found at S897. The segment covering 915-942 (DDDDEEDEEEDDVEADADQEDDDDEVVV) has biased composition (acidic residues). T951 is subject to Phosphothreonine. The segment covering 983-1001 (SAKSAATTRPGNGYQSESV) has biased composition (polar residues). A compositionally biased stretch (low complexity) spans 1058 to 1076 (NSSSNNSSNINSNSNSNSN). Residues 1089–1098 (EAREQRKRDA) are compositionally biased toward basic and acidic residues. Composition is skewed to low complexity over residues 1178–1188 (QQQRALQRHLA) and 1197–1214 (QQQS…QQQS).

It belongs to the peptidase C19 family. As to quaternary structure, interacts with atms/PAF1, but not with CycT.

The protein localises to the nucleus. The protein resides in the nucleolus. It catalyses the reaction Thiol-dependent hydrolysis of ester, thioester, amide, peptide and isopeptide bonds formed by the C-terminal Gly of ubiquitin (a 76-residue protein attached to proteins as an intracellular targeting signal).. Required for maintaining multiple types of adult stem cells, including male and female germline, epithelial follicle cell and intestinal stem cells. May function as a transcriptional repressor by continually deubiquiting histone H2B at the promoters of genes critical for cellular differentiation, thereby preventing histone H3 'Lys-4' trimethylation (H3K4). Controls selective autophagy activation by ubiquitinated proteins. The polypeptide is Ubiquitin carboxyl-terminal hydrolase 36 (Usp36) (Drosophila virilis (Fruit fly)).